The chain runs to 300 residues: Probable endonuclease 4 (300 aa).

Residues H68, H109, E144, D178, H181, H213, D226, H228, and E258 each contribute to the Zn(2+) site.

This sequence belongs to the AP endonuclease 2 family. Requires Zn(2+) as cofactor.

It carries out the reaction Endonucleolytic cleavage to 5'-phosphooligonucleotide end-products.. In terms of biological role, endonuclease IV plays a role in DNA repair. It cleaves phosphodiester bonds at apurinic or apyrimidinic (AP) sites, generating a 3'-hydroxyl group and a 5'-terminal sugar phosphate. The chain is Probable endonuclease 4 from Latilactobacillus sakei subsp. sakei (strain 23K) (Lactobacillus sakei subsp. sakei).